Reading from the N-terminus, the 209-residue chain is NAD(P)H-quinone oxidoreductase subunit I (209 aa).

2 4Fe-4S ferredoxin-type domains span residues 55–84 (GRIH…VDWE) and 95–124 (KHYS…MTEE). Positions 64, 67, 70, 74, 104, 107, 110, and 114 each coordinate [4Fe-4S] cluster.

This sequence belongs to the complex I 23 kDa subunit family. In terms of assembly, NDH-1 is composed of at least 11 different subunits. The cofactor is [4Fe-4S] cluster.

It localises to the cellular thylakoid membrane. It carries out the reaction a plastoquinone + NADH + (n+1) H(+)(in) = a plastoquinol + NAD(+) + n H(+)(out). The enzyme catalyses a plastoquinone + NADPH + (n+1) H(+)(in) = a plastoquinol + NADP(+) + n H(+)(out). In terms of biological role, NDH-1 shuttles electrons from an unknown electron donor, via FMN and iron-sulfur (Fe-S) centers, to quinones in the respiratory and/or the photosynthetic chain. The immediate electron acceptor for the enzyme in this species is believed to be plastoquinone. Couples the redox reaction to proton translocation, and thus conserves the redox energy in a proton gradient. This Trichodesmium erythraeum (strain IMS101) protein is NAD(P)H-quinone oxidoreductase subunit I.